A 282-amino-acid chain; its full sequence is Aldo-keto reductase MT3049 (282 aa).

The Proton donor role is filled by Tyr57. NADPH contacts are provided by Leu197, Val235, Arg237, Ser238, Ala239, Arg243, Ser246, Asn247, and Arg273.

This sequence belongs to the aldo/keto reductase family.

The chain is Aldo-keto reductase MT3049 from Mycobacterium tuberculosis (strain CDC 1551 / Oshkosh).